Reading from the N-terminus, the 2270-residue chain is Protein DOP1B (2270 aa).

Disordered regions lie at residues Met-548–Glu-572, Leu-697–Glu-716, and Gln-1084–Arg-1145. The segment covering Ala-1095 to Arg-1145 has biased composition (polar residues).

This sequence belongs to the DOP1 family.

It localises to the golgi apparatus membrane. Its function is as follows. May be involved in protein traffic between late Golgi and early endosomes. This chain is Protein DOP1B (dop1b), found in Xenopus laevis (African clawed frog).